The chain runs to 833 residues: MHQLFRLVLGQKDLSRAGDLFSLDDSEIEDSLTEALEQIKIISSSSDYQTNNNDQAVVEICITRITTAIRETESIEKHAKALVGLWDSCLEHNLRPFGKDEDTPHAKIASDIMSCILQNYNRPPVMALAIPIAVKFLHRGNKELCRNMSNYLSLAAITKADLLADHTEVIVKSILQGNTMLLRVLPAVYEKQPQPINRHLTELLALMSQLEQPEQYHLLRLLHVAAKKKQLEVVQKCIPFLIGHLKDSTHNDIILNILIEIAVYEPVALNSFLPMLKEIGERFPYLTGQMARIYGAVGHVDEERARSCLTYLVSQLANMEHSFHHILLLEIKSITDTFSSILGPQSRDIFRMSNSFTAIAKLLTRQLENTKAGSGRRKISTEIEFPEKLEETKLIVTENEDHEKLQVKIQAFEDKINAGSNTPGSIRRYSLGQVSKEERKNIRFNRSKSLAFHTMLTKGVGSDDGEDENRGDIPASISLSEIDPLGQGNDKLPFKTDTERSQLGESSVSYPNIIHIDSENLSETVKENSQEETPETTASPIEYQDKLYLHLKKNLSKVKAYAMEIGKKIPVPDQCTIEDTVRSCVAKLFFTCSLKGHYCLYSKSSFILISQEPQPWIQIMFLFQQSLFPEPLSIQSHSVQFLRALWEKTQAGGAHSFETAMMESTFPQQKDLDQVQLHLEEVRFFDVFGFSETAGAWQCFMCNNPEKATVVNQDGQPLIEGKLKEKQVRWKFIKRWKTRYFTLAGNQLLFQKGKSKDDPDDCPIELSKVQSVKAVAKKRRDRSLPRAFEIFTDNKTYVFKAKDEKNAEEWLQCINVAVAQAKERESREVTTYL.

The segment at 201 to 319 is interaction with TGFBR1; that stretch reads TELLALMSQL…TYLVSQLANM (119 aa). The segment at 458–505 is disordered; the sequence is KGVGSDDGEDENRGDIPASISLSEIDPLGQGNDKLPFKTDTERSQLGE. The span at 492–502 shows a compositional bias: basic and acidic residues; that stretch reads LPFKTDTERSQ. Positions 663–833 are interaction with TGFBR1; it reads ESTFPQQKDL…RESREVTTYL (171 aa). Residues 716–819 form the PH domain; sequence QPLIEGKLKE…WLQCINVAVA (104 aa).

It belongs to the MELT/VEPH family. In terms of assembly, interacts with TGFBR1.

The protein resides in the cell membrane. In terms of biological role, interacts with TGF-beta receptor type-1 (TGFBR1) and inhibits dissociation of activated SMAD2 from TGFBR1, impeding its nuclear accumulation and resulting in impaired TGF-beta signaling. May also affect FOXO, Hippo and Wnt signaling. The protein is Ventricular zone-expressed PH domain-containing protein homolog 1 (VEPH1) of Homo sapiens (Human).